Here is a 454-residue protein sequence, read N- to C-terminus: Transmembrane protease serine 3 (454 aa).

Residues 1 to 48 are Cytoplasmic-facing; the sequence is MGENDPPAVEAPFSFRSLFGLDDLKISPVAPDADAVAAQILSLLPLKF. The helical; Signal-anchor for type II membrane protein transmembrane segment at 49–69 threads the bilayer; that stretch reads FPIIVIGIIALILALAIGLGI. At 70 to 454 the chain is on the extracellular side; the sequence is HFDCSGKYRC…HEQMERDLKT (385 aa). One can recognise an LDL-receptor class A domain in the interval 72–108; the sequence is DCSGKYRCRSSFKCIELIARCDGVSDCKDGEDEYRCV. 10 disulfide bridges follow: cysteine 73–cysteine 85, cysteine 79–cysteine 98, cysteine 92–cysteine 107, cysteine 129–cysteine 194, cysteine 142–cysteine 204, cysteine 207–cysteine 324, cysteine 242–cysteine 258, cysteine 338–cysteine 407, cysteine 370–cysteine 386, and cysteine 397–cysteine 425. In terms of domain architecture, SRCR spans 109–205; sequence RVGGQNAVLQ…SGHVVTLQCT (97 aa). Positions 217-449 constitute a Peptidase S1 domain; the sequence is IVGGNMSLLS…FLDWIHEQME (233 aa). The N-linked (GlcNAc...) asparagine glycan is linked to asparagine 221. Active-site charge relay system residues include histidine 257 and aspartate 304. The active-site Charge relay system is serine 401.

This sequence belongs to the peptidase S1 family. Undergoes autoproteolytic activation. As to expression, expressed in many tissues including fetal cochlea. Isoform T is found at increased levels in some carcinomas.

Its subcellular location is the endoplasmic reticulum membrane. Probable serine protease that plays a role in hearing. Acts as a permissive factor for cochlear hair cell survival and activation at the onset of hearing and is required for saccular hair cell survival. Activates ENaC (in vitro). The protein is Transmembrane protease serine 3 (TMPRSS3) of Homo sapiens (Human).